The primary structure comprises 203 residues: Urease accessory protein UreG (203 aa).

11 to 18 (GPVGSGKT) contributes to the GTP binding site.

It belongs to the SIMIBI class G3E GTPase family. UreG subfamily. As to quaternary structure, homodimer. UreD, UreF and UreG form a complex that acts as a GTP-hydrolysis-dependent molecular chaperone, activating the urease apoprotein by helping to assemble the nickel containing metallocenter of UreC. The UreE protein probably delivers the nickel.

Its subcellular location is the cytoplasm. Facilitates the functional incorporation of the urease nickel metallocenter. This process requires GTP hydrolysis, probably effectuated by UreG. This is Urease accessory protein UreG from Prochlorococcus marinus (strain AS9601).